A 91-amino-acid polypeptide reads, in one-letter code: Sm-like protein LSM36B (91 aa).

The Sm domain maps to 14 to 86 (TPADFLKSIR…VLYISTTKGT (73 aa)).

The protein belongs to the snRNP Sm proteins family. As to quaternary structure, component of the heptameric LSM1-LSM7 complex that forms a seven-membered ring structure with a donut shape. The LSM subunits are arranged in the order LSM1, LSM2, LSM3, LSM6, LSM5, LSM7 and LSM4. Component of the heptameric LSM2-LSM8 complex that forms a seven-membered ring structure with a donut shape. The LSM subunits are arranged in the order LSM8, LSM2, LSM3, LSM6, LSM5, LSM7 and LSM4. LSM6B subunit interacts only with its two neighboring subunits, LSM3A or LSM3B and LSM5. Expressed in roots, leaves, stems, flowers and siliques.

It is found in the cytoplasm. The protein resides in the nucleus. Functionally, component of LSM protein complexes, which are involved in RNA processing. Component of the cytoplasmic LSM1-LSM7 complex which is involved in mRNA degradation by promoting decapping and leading to accurate 5'-3' mRNA decay. The cytoplasmic LSM1-LSM7 complex regulates developmental gene expression by the decapping of specific development-related transcripts. Component of the nuclear LSM2-LSM8 complex which is involved splicing nuclear mRNAs. LSM2-LSM8 binds directly to the U6 small nuclear RNAs (snRNAs) and is essential for accurate splicing of selected development-related mRNAs through the stabilization of the spliceosomal U6 snRNA. Plays a critical role in the regulation of development-related gene expression. This chain is Sm-like protein LSM36B, found in Arabidopsis thaliana (Mouse-ear cress).